Here is a 164-residue protein sequence, read N- to C-terminus: UPF0304 protein CKO_00501 (164 aa).

It belongs to the UPF0304 family.

This is UPF0304 protein CKO_00501 from Citrobacter koseri (strain ATCC BAA-895 / CDC 4225-83 / SGSC4696).